The following is a 792-amino-acid chain: MSSYQSEFNADEQAAIDKEFTRLANNKSIYLDHAGTTLYAESQVTAAAEQLQRDVICNPHTCRVTGDYVDQVRFKVLEFFNTKEDDYHVIFTANATAALSLVAENFDFGRQGNFHYCQENHTSVLGMRERVQARAMYMLKEEEITGMASLPSAANGVDGSSPGDNSLVTFSAQCNFSGYKIPLAAIAGIQKQGLAHGLGKRVSGEAPQTTDNNNYYVCLDAASFVATNPLDLQRYRPDYVCISFYKIFGYPTGVGALLVSRRGAEAFRKKRNFFGGGTINYAYPHAMDHQLREVFHQRYEDGTLPFLSIVGLLEGFRTLGRLVPRRSDVATMERISRHVHGLAQYLEKQLRQLKYPNGQPLIELYNRVGYEERHRQGGIVAFNVRTDAGPFVGFGEIACVAALQGILLRTGCFCNIGACQRYLGLDETMMDAIYKRAGRICGDYYDLIDGQPTGAVRVSFGYMTRRQDVDELLKMLQLSYLATKPQQRLQLIEEQAGELPKALKERAQRLRPQLLQLAIYPVKSCAAFKIKEGGGGGGAGAGRTWPLTAQGLQYDREWMIVDMNGMAVTQKRCSELCLIRPLIRDDQLVLHFGDSPAGVSLPLSLADQAENSSRCRSKVCRQPVEGLDCGDEVALWLSQHLGLEGLRLLRQSSQRSASNGVRQQQKLSLVNQAQFLLVNRSSVRSLQFEESLDETVDRFRANIIIDTGSAFEELSYKQLTIGQVQFQVEGPCQRCDMICINQRTGERSPETLTTISRLQSGKMRFGIYISRISTENNKEQQHLTCGDVVVVT.

An N6-(pyridoxal phosphate)lysine modification is found at lysine 246. The active site involves cysteine 414. Residues 646 to 792 form the MOSC domain; that stretch reads LRLLRQSSQR…LTCGDVVVVT (147 aa). Serine 748 carries the post-translational modification Phosphoserine.

The protein belongs to the class-V pyridoxal-phosphate-dependent aminotransferase family. MOCOS subfamily. Pyridoxal 5'-phosphate is required as a cofactor.

It catalyses the reaction Mo-molybdopterin + L-cysteine + AH2 = thio-Mo-molybdopterin + L-alanine + A + H2O. Its pathway is cofactor biosynthesis; molybdopterin biosynthesis. Sulfurates the molybdenum cofactor. Sulfation of molybdenum is essential for xanthine dehydrogenase (XDH) and aldehyde oxidase (ADO) enzymes in which molybdenum cofactor is liganded by 1 oxygen and 1 sulfur atom in active form. The sequence is that of Molybdenum cofactor sulfurase from Drosophila pseudoobscura pseudoobscura (Fruit fly).